We begin with the raw amino-acid sequence, 94 residues long: Co-chaperonin GroES (94 aa).

The protein belongs to the GroES chaperonin family. In terms of assembly, heptamer of 7 subunits arranged in a ring. Interacts with the chaperonin GroEL.

It is found in the cytoplasm. In terms of biological role, together with the chaperonin GroEL, plays an essential role in assisting protein folding. The GroEL-GroES system forms a nano-cage that allows encapsulation of the non-native substrate proteins and provides a physical environment optimized to promote and accelerate protein folding. GroES binds to the apical surface of the GroEL ring, thereby capping the opening of the GroEL channel. The sequence is that of Co-chaperonin GroES from Geobacillus thermodenitrificans (strain NG80-2).